The chain runs to 887 residues: Alanine--tRNA ligase (887 aa).

Positions 564, 568, 676, and 680 each coordinate Zn(2+).

This sequence belongs to the class-II aminoacyl-tRNA synthetase family. The cofactor is Zn(2+).

Its subcellular location is the cytoplasm. The enzyme catalyses tRNA(Ala) + L-alanine + ATP = L-alanyl-tRNA(Ala) + AMP + diphosphate. Catalyzes the attachment of alanine to tRNA(Ala) in a two-step reaction: alanine is first activated by ATP to form Ala-AMP and then transferred to the acceptor end of tRNA(Ala). Also edits incorrectly charged Ser-tRNA(Ala) and Gly-tRNA(Ala) via its editing domain. This chain is Alanine--tRNA ligase, found in Agrobacterium fabrum (strain C58 / ATCC 33970) (Agrobacterium tumefaciens (strain C58)).